The following is a 123-amino-acid chain: MRQESLVTKYDYDFENDSIFFYGSNKKYRSSIDLDGIILDIGEDDQIMAIEILDASNRFNLAKEDLRNIKYFEARIEVSEENIRLTMKMSVNKRNKLVDKGLDALGLNSINLPISTQGIELNC.

May play a role in purine salvage. The polypeptide is Putative hypoxanthine phosphoribosyltransferase (Methanosarcina mazei (strain ATCC BAA-159 / DSM 3647 / Goe1 / Go1 / JCM 11833 / OCM 88) (Methanosarcina frisia)).